The following is a 505-amino-acid chain: tRNA (guanine(6)-N(2))-methyltransferase THUMP3 (505 aa).

The segment at Lys-145–Ser-182 is disordered. The span at Gly-156–Gly-173 shows a compositional bias: basic and acidic residues. One can recognise a THUMP domain in the interval Lys-171–Leu-287.

This sequence belongs to the methyltransferase superfamily. Part of the heterodimeric THUMPD3-TRM112 methyltransferase complex; this complex forms an active tRNA methyltransferase, where TRMT112 acts as an activator of the catalytic subunit THUMPD3. In terms of tissue distribution, ubiquitously expressed. Abundantly expressed in the testis, also expressed in the brain, heart, kidney, liver, lung, muscle and spleen.

It is found in the cytoplasm. It catalyses the reaction guanosine(6) in tRNA + S-adenosyl-L-methionine = N(2)-methylguanosine(6) in tRNA + S-adenosyl-L-homocysteine + H(+). The enzyme catalyses guanosine(7) in tRNA + S-adenosyl-L-methionine = N(2)-methylguanosine(7) in tRNA + S-adenosyl-L-homocysteine + H(+). In terms of biological role, catalytic subunit of the THUMPD3-TRM112 methyltransferase complex, that specifically mediates the S-adenosyl-L-methionine-dependent N(2)-methylation of guanosine nucleotide at position 6 (m2G6) in tRNAs. This is one of the major tRNA (guanine-N(2))-methyltransferases. Also catalyzes the S-adenosyl-L-methionine-dependent N(2)-methylation of guanosine nucleotide at position 7 of tRNA(Trp). This is tRNA (guanine(6)-N(2))-methyltransferase THUMP3 from Mus musculus (Mouse).